A 261-amino-acid polypeptide reads, in one-letter code: Early 31 kDa protein (261 aa).

Residues 230–261 (INKYSADTDEEEEEEEDNAEDTEEEEEEEADQ) are disordered. Residues 236 to 261 (DTDEEEEEEEDNAEDTEEEEEEEADQ) show a composition bias toward acidic residues.

This Frog virus 3 (isolate Goorha) (FV-3) protein is Early 31 kDa protein.